Reading from the N-terminus, the 366-residue chain is Purple acid phosphatase 3 (366 aa).

Positions 1–32 are cleaved as a signal peptide; the sequence is MTYIYRDTKITTKSTIPFLIFFLFCFSNLSMA. A Fe cation-binding site is contributed by Asp81. Residue Asn89 is glycosylated (N-linked (GlcNAc...) asparagine). Positions 114 and 117 each coordinate Fe cation. A Zn(2+)-binding site is contributed by Asp114. 2 residues coordinate Zn(2+): Asn152 and His246. His255 serves as the catalytic Proton donor. Residue His281 coordinates Zn(2+). Substrate is bound at residue 281-283; sequence HDH. His283 lines the Fe cation pocket.

It belongs to the metallophosphoesterase superfamily. Purple acid phosphatase family. In terms of assembly, homodimer. Requires Fe cation as cofactor. Zn(2+) is required as a cofactor. Expressed in stems, leaves, flowers and siliques.

The protein resides in the secreted. It catalyses the reaction a phosphate monoester + H2O = an alcohol + phosphate. This Arabidopsis thaliana (Mouse-ear cress) protein is Purple acid phosphatase 3 (PAP3).